Reading from the N-terminus, the 206-residue chain is Uridine kinase (206 aa).

9-16 (GGSGSGKT) contributes to the ATP binding site.

This sequence belongs to the uridine kinase family. In terms of assembly, monomer.

The protein resides in the cytoplasm. It carries out the reaction uridine + ATP = UMP + ADP + H(+). The enzyme catalyses cytidine + ATP = CMP + ADP + H(+). It participates in pyrimidine metabolism; CTP biosynthesis via salvage pathway; CTP from cytidine: step 1/3. Its pathway is pyrimidine metabolism; UMP biosynthesis via salvage pathway; UMP from uridine: step 1/1. The protein is Uridine kinase (udk) of Borreliella burgdorferi (strain ATCC 35210 / DSM 4680 / CIP 102532 / B31) (Borrelia burgdorferi).